An 815-amino-acid chain; its full sequence is Lon protease 1 (815 aa).

One can recognise a Lon N-terminal domain in the interval 12 to 205 (VFVLALRDVV…HILKTIETEI (194 aa)). 358 to 365 (GPPGVGKT) contacts ATP. Residues 594–775 (TNQIGQVAGL…DEVFKIALES (182 aa)) enclose the Lon proteolytic domain. Catalysis depends on residues serine 681 and lysine 724.

This sequence belongs to the peptidase S16 family. Homohexamer. Organized in a ring with a central cavity.

Its subcellular location is the cytoplasm. The catalysed reaction is Hydrolysis of proteins in presence of ATP.. ATP-dependent serine protease that mediates the selective degradation of mutant and abnormal proteins as well as certain short-lived regulatory proteins. Required for cellular homeostasis and for survival from DNA damage and developmental changes induced by stress. Degrades polypeptides processively to yield small peptide fragments that are 5 to 10 amino acids long. Binds to DNA in a double-stranded, site-specific manner. This Hydrogenovibrio crunogenus (strain DSM 25203 / XCL-2) (Thiomicrospira crunogena) protein is Lon protease 1.